A 558-amino-acid polypeptide reads, in one-letter code: Putative transport protein VC0395_A0715/VC395_1212 (558 aa).

The next 5 helical transmembrane spans lie at 5 to 25 (VVLLLEQNPILLIFVVLAIGL), 37 to 57 (LGNSIGVLITSLIMGHLGFSF), 66 to 86 (FMLFIYCVGIEAGPNFFGIFF), 92 to 112 (YLILSLVVLITATWIAYFGGY), and 164 to 184 (VGYAMAYLIGLISMIMFAKLL). 2 RCK C-terminal domains span residues 203–290 (RGLG…FRNG) and 291–374 (KEVF…KIGF). 6 helical membrane-spanning segments follow: residues 384–404 (LLAFCSFFILGILFGLVTMTF), 407–427 (VSFSLGNAVGLLLSGITLGFL), 441–461 (ALNMVKDLGLAIFMVGIGLNA), 476–496 (VIGLAFLVSVVPVVFAYLVGA), 504–524 (ALLFGAIIGARTCAPAMDVVN), and 537–557 (AGTYAIANILMTLTGTIFILL).

This sequence belongs to the AAE transporter (TC 2.A.81) family. YbjL subfamily.

It is found in the cell membrane. The polypeptide is Putative transport protein VC0395_A0715/VC395_1212 (Vibrio cholerae serotype O1 (strain ATCC 39541 / Classical Ogawa 395 / O395)).